A 1214-amino-acid chain; its full sequence is [F-actin]-monooxygenase mical1 (1214 aa).

Positions 1–488 (MVNPLDSVNP…KRLYEAEEQE (488 aa)) are monooxygenase domain. Residues cysteine 96, 115 to 117 (EKR), 122 to 124 (RNN), phenylalanine 182, tyrosine 292, and aspartate 392 contribute to the FAD site. The interval 484–505 (AEEQESKPNKLKKPDIKAKPRK) is disordered. Positions 508-614 (MKRLEELLSW…YLTQIRNALT (107 aa)) constitute a Calponin-homology (CH) domain. The segment at 649 to 676 (HKDRLASVKGPRQQNMKEKEEKKDVKEE) is disordered. A compositionally biased stretch (basic and acidic residues) spans 663–676 (NMKEKEEKKDVKEE). Positions 686-748 (EPCYFCKKHL…ELHSLAEEEE (63 aa)) constitute an LIM zinc-binding domain. Residues cysteine 688, cysteine 691, histidine 709, cysteine 712, cysteine 715, cysteine 718, cysteine 738, and histidine 741 each coordinate Zn(2+). The disordered stretch occupies residues 747–1019 (EEGDEGHGGA…DDEDEDEEDL (273 aa)). Residues 796–815 (PDFDESTEFPAPDQDEPPDL) show a composition bias toward acidic residues. Over residues 828–841 (SAENTNMENQQHNI) the composition is skewed to polar residues. Residues 910–922 (RGSSSAASTSSSS) show a composition bias toward low complexity. A compositionally biased stretch (polar residues) spans 974–987 (SPWNLSSPRLQQRF). The segment covering 1003-1019 (VSEDDNEDDEDEDEEDL) has biased composition (acidic residues). Positions 1053-1199 (KMTEIQRFHK…EVNDQFNSSL (147 aa)) constitute a bMERB domain. The stretch at 1061–1131 (HKAQSIQRRL…DLMVASRQLE (71 aa)) forms a coiled coil. Residues 1194–1214 (QFNSSLDAKRRSTTASQVHWE) form a disordered region.

Belongs to the Mical family. FAD is required as a cofactor.

The protein localises to the cytoplasm. It is found in the cytoskeleton. The protein resides in the midbody. It localises to the endosome membrane. It carries out the reaction L-methionyl-[F-actin] + NADPH + O2 + H(+) = L-methionyl-(R)-S-oxide-[F-actin] + NADP(+) + H2O. It catalyses the reaction NADPH + O2 + H(+) = H2O2 + NADP(+). Functionally, monooxygenase that promotes depolymerization of F-actin by mediating oxidation of specific methionine residues on actin to form methionine-sulfoxide, resulting in actin filament disassembly and prevent repolymerization. May be involved in endosomal tubule extension and neosynthesized protein export. The protein is [F-actin]-monooxygenase mical1 (mical1) of Danio rerio (Zebrafish).